Here is a 427-residue protein sequence, read N- to C-terminus: Putative F-box protein At4g10740 (427 aa).

In terms of domain architecture, F-box spans arginine 2–methionine 47.

In Arabidopsis thaliana (Mouse-ear cress), this protein is Putative F-box protein At4g10740.